We begin with the raw amino-acid sequence, 152 residues long: Xanthine-guanine phosphoribosyltransferase (152 aa).

5-phospho-alpha-D-ribose 1-diphosphate is bound by residues 37–38 (RG), Arg-69, and 88–96 (DDLVDTGVT). A GMP-binding site is contributed by Arg-69. Residue Asp-89 coordinates Mg(2+). The guanine site is built by Asp-92 and Ile-135. The xanthine site is built by Asp-92 and Ile-135. Residues 92 to 96 (DTGVT) and 134 to 135 (WI) each bind GMP.

The protein belongs to the purine/pyrimidine phosphoribosyltransferase family. XGPT subfamily. Homotetramer. Mg(2+) is required as a cofactor.

The protein localises to the cell inner membrane. The catalysed reaction is GMP + diphosphate = guanine + 5-phospho-alpha-D-ribose 1-diphosphate. It carries out the reaction XMP + diphosphate = xanthine + 5-phospho-alpha-D-ribose 1-diphosphate. It catalyses the reaction IMP + diphosphate = hypoxanthine + 5-phospho-alpha-D-ribose 1-diphosphate. It functions in the pathway purine metabolism; GMP biosynthesis via salvage pathway; GMP from guanine: step 1/1. Its pathway is purine metabolism; XMP biosynthesis via salvage pathway; XMP from xanthine: step 1/1. Purine salvage pathway enzyme that catalyzes the transfer of the ribosyl-5-phosphate group from 5-phospho-alpha-D-ribose 1-diphosphate (PRPP) to the N9 position of the 6-oxopurines guanine and xanthine to form the corresponding ribonucleotides GMP (guanosine 5'-monophosphate) and XMP (xanthosine 5'-monophosphate), with the release of PPi. To a lesser extent, also acts on hypoxanthine. The protein is Xanthine-guanine phosphoribosyltransferase of Sodalis glossinidius (strain morsitans).